We begin with the raw amino-acid sequence, 615 residues long: Elongation factor 4 (615 aa).

One can recognise a tr-type G domain in the interval Ser-14–Thr-200. GTP is bound by residues Asp-26 to Thr-31 and Asn-147 to Asp-150.

The protein belongs to the TRAFAC class translation factor GTPase superfamily. Classic translation factor GTPase family. LepA subfamily.

It is found in the cell membrane. It catalyses the reaction GTP + H2O = GDP + phosphate + H(+). Functionally, required for accurate and efficient protein synthesis under certain stress conditions. May act as a fidelity factor of the translation reaction, by catalyzing a one-codon backward translocation of tRNAs on improperly translocated ribosomes. Back-translocation proceeds from a post-translocation (POST) complex to a pre-translocation (PRE) complex, thus giving elongation factor G a second chance to translocate the tRNAs correctly. Binds to ribosomes in a GTP-dependent manner. The polypeptide is Elongation factor 4 (Corynebacterium aurimucosum (strain ATCC 700975 / DSM 44827 / CIP 107346 / CN-1) (Corynebacterium nigricans)).